The primary structure comprises 473 residues: Probable DNA N(6)-methyladenine demethylase ALKBH1B (473 aa).

A 2-oxoglutarate-binding site is contributed by 357–359; it reads NFY. Residues histidine 368, aspartate 391, and histidine 449 each coordinate Fe cation. 461-465 lines the 2-oxoglutarate pocket; the sequence is RLFFR.

This sequence belongs to the alkB family. Fe(2+) is required as a cofactor. Undetectable.

The enzyme catalyses an N(6)-methyl-2'-deoxyadenosine in DNA + 2-oxoglutarate + O2 = a 2'-deoxyadenosine in DNA + formaldehyde + succinate + CO2. Dioxygenase that may catalyzes DNA N(6)-methyladenine (6 mA) demethylation. Requires molecular oxygen, alpha-ketoglutarate and iron. This chain is Probable DNA N(6)-methyladenine demethylase ALKBH1B, found in Arabidopsis thaliana (Mouse-ear cress).